The primary structure comprises 640 residues: Chaperone protein HtpG (640 aa).

The tract at residues 1 to 343 (MQTAENVEHL…SNDLPLNVSR (343 aa)) is a; substrate-binding. Residues 344 to 564 (EILQESKDID…THDMSGNLGR (221 aa)) form a b region. The tract at residues 565–640 (LLKSAGQKVP…LLLQNILSGK (76 aa)) is c.

This sequence belongs to the heat shock protein 90 family. Homodimer.

The protein resides in the cytoplasm. In terms of biological role, molecular chaperone. Has ATPase activity. This is Chaperone protein HtpG from Nitrosomonas eutropha (strain DSM 101675 / C91 / Nm57).